A 211-amino-acid polypeptide reads, in one-letter code: Large ribosomal subunit protein bL25 (211 aa).

The segment covering 1-18 has biased composition (basic and acidic residues); sequence MAKTHEIKAERRADEGKG. The interval 1–20 is disordered; the sequence is MAKTHEIKAERRADEGKGAS.

Belongs to the bacterial ribosomal protein bL25 family. CTC subfamily. Part of the 50S ribosomal subunit; part of the 5S rRNA/L5/L18/L25 subcomplex. Contacts the 5S rRNA. Binds to the 5S rRNA independently of L5 and L18.

This is one of the proteins that binds to the 5S RNA in the ribosome where it forms part of the central protuberance. The protein is Large ribosomal subunit protein bL25 of Xanthomonas oryzae pv. oryzae (strain MAFF 311018).